The sequence spans 275 residues: Methylesterase 10 (275 aa).

The active-site Acyl-ester intermediate is the serine 96. Active-site charge relay system residues include aspartate 225 and histidine 253.

This sequence belongs to the AB hydrolase superfamily. Methylesterase family.

It carries out the reaction methyl (-)-jasmonate + H2O = jasmonate + methanol + H(+). It participates in plant hormone biosynthesis. Its pathway is lipid metabolism; oxylipin biosynthesis. Functionally, methylesterase shown to have methyl jasmonate (MeJA) esterase activity in vitro. In Arabidopsis thaliana (Mouse-ear cress), this protein is Methylesterase 10.